The sequence spans 275 residues: Putative carbamate hydrolase RutD (275 aa).

It belongs to the AB hydrolase superfamily. Hydrolase RutD family.

It catalyses the reaction carbamate + 2 H(+) = NH4(+) + CO2. Involved in pyrimidine catabolism. May facilitate the hydrolysis of carbamate, a reaction that can also occur spontaneously. The polypeptide is Putative carbamate hydrolase RutD (Escherichia coli (strain UTI89 / UPEC)).